The sequence spans 200 residues: GTP cyclohydrolase 1 (200 aa).

Zn(2+)-binding residues include cysteine 87, histidine 90, and cysteine 158.

Belongs to the GTP cyclohydrolase I family. As to quaternary structure, toroid-shaped homodecamer, composed of two pentamers of five dimers.

It catalyses the reaction GTP + H2O = 7,8-dihydroneopterin 3'-triphosphate + formate + H(+). It functions in the pathway cofactor biosynthesis; 7,8-dihydroneopterin triphosphate biosynthesis; 7,8-dihydroneopterin triphosphate from GTP: step 1/1. The protein is GTP cyclohydrolase 1 of Xanthomonas axonopodis pv. citri (strain 306).